We begin with the raw amino-acid sequence, 122 residues long: Large ribosomal subunit protein uL29A (122 aa).

Positions 10 to 69 (QLGIKQIEERAAEIKADLAALRQKKNSGDVGANDIKTAKKNLARALTVRREKILEELVEA) form a coiled coil.

It belongs to the universal ribosomal protein uL29 family. As to quaternary structure, component of the large ribosomal subunit.

Its subcellular location is the cytoplasm. This Encephalitozoon cuniculi (strain GB-M1) (Microsporidian parasite) protein is Large ribosomal subunit protein uL29A (RPL35A).